The following is a 409-amino-acid chain: Probable plastid-lipid-associated protein 12, chloroplastic (409 aa).

A chloroplast-targeting transit peptide spans 1-55; sequence MVAVRFYAVEMSLPCLCPCPSSPISLSLCSPRFNLLNTTSRRLGLSRNCRTLRIS.

Belongs to the PAP/fibrillin family.

The protein resides in the plastid. It is found in the chloroplast thylakoid. This chain is Probable plastid-lipid-associated protein 12, chloroplastic (PAP12), found in Arabidopsis thaliana (Mouse-ear cress).